The following is a 49-amino-acid chain: Toxic protein HokB (49 aa).

Residues 4 to 24 (NPLVVCLLIICITILTFTLLT) form a helical membrane-spanning segment.

This sequence belongs to the Hok/Gef family.

The protein resides in the cell inner membrane. In terms of biological role, toxic component of a type I toxin-antitoxin (TA) system. When overexpressed kills cells within minutes; causes collapse of the transmembrane potential and arrest of respiration. Expression leads to membrane depolarization; when protein levels are high enough depolarization probably leads to lowered metabolic activity which in turn induces some cells to enter the persistent state in which they transiently survive antibiotic exposure. Its toxic effect is probably neutralized by antisense antitoxin RNA SokB, which is encoded in trans on the opposite DNA strand. This chain is Toxic protein HokB, found in Escherichia coli (strain K12).